A 457-amino-acid polypeptide reads, in one-letter code: Argininosuccinate lyase (457 aa).

It belongs to the lyase 1 family. Argininosuccinate lyase subfamily.

Its subcellular location is the cytoplasm. It catalyses the reaction 2-(N(omega)-L-arginino)succinate = fumarate + L-arginine. Its pathway is amino-acid biosynthesis; L-arginine biosynthesis; L-arginine from L-ornithine and carbamoyl phosphate: step 3/3. This Klebsiella pneumoniae (strain 342) protein is Argininosuccinate lyase.